A 96-amino-acid chain; its full sequence is Large ribosomal subunit protein bL27 (96 aa).

A propeptide spanning residues 1-9 (MLRLDLQFF) is cleaved from the precursor. Residues 13–35 (KGVGSTKNGRDSQSKRLGAKRAD) form a disordered region.

This sequence belongs to the bacterial ribosomal protein bL27 family. In terms of processing, the N-terminus is cleaved by ribosomal processing cysteine protease Prp.

The sequence is that of Large ribosomal subunit protein bL27 from Bacillus cereus (strain B4264).